We begin with the raw amino-acid sequence, 201 residues long: Transgelin (201 aa).

At A2 the chain carries N-acetylalanine. Residues 24-137 form the Calponin-homology (CH) domain; the sequence is EELEERLVEW…RTLMALGSLA (114 aa). S166 is subject to Phosphoserine. K172 is modified (N6-acetyllysine). A Calponin-like repeat occupies 175–200; it reads IGLQMGSNRGASQAGMTGYGRPRQII. S181 carries the post-translational modification Phosphoserine. R183 is modified (omega-N-methylarginine).

It belongs to the calponin family.

The protein localises to the cytoplasm. Its function is as follows. Actin cross-linking/gelling protein. Involved in calcium interactions and contractile properties of the cell that may contribute to replicative senescence. In Homo sapiens (Human), this protein is Transgelin (TAGLN).